The sequence spans 183 residues: Photosystem I assembly protein Ycf4 (183 aa).

The next 2 helical transmembrane spans lie at 21–43 and 63–85; these read YIWGSLMCLGGLGFLTIGISSYL and LVMCFYGVLGFLLGVYIWLLILW.

Belongs to the Ycf4 family.

It is found in the plastid. It localises to the chloroplast thylakoid membrane. Seems to be required for the assembly of the photosystem I complex. In Chlorella vulgaris (Green alga), this protein is Photosystem I assembly protein Ycf4.